Here is a 706-residue protein sequence, read N- to C-terminus: DNA ligase (706 aa).

Residues 48–52 (DAAYD), 97–98 (SL), and Glu-131 contribute to the NAD(+) site. Lys-133 serves as the catalytic N6-AMP-lysine intermediate. Residues Arg-154, Glu-191, Lys-307, and Lys-331 each contribute to the NAD(+) site. 4 residues coordinate Zn(2+): Cys-425, Cys-428, Cys-443, and Cys-449. The BRCT domain maps to 628–706 (RADSAVAGKT…EDEWLKLIEG (79 aa)).

Belongs to the NAD-dependent DNA ligase family. LigA subfamily. Requires Mg(2+) as cofactor. Mn(2+) is required as a cofactor.

The enzyme catalyses NAD(+) + (deoxyribonucleotide)n-3'-hydroxyl + 5'-phospho-(deoxyribonucleotide)m = (deoxyribonucleotide)n+m + AMP + beta-nicotinamide D-nucleotide.. Its function is as follows. DNA ligase that catalyzes the formation of phosphodiester linkages between 5'-phosphoryl and 3'-hydroxyl groups in double-stranded DNA using NAD as a coenzyme and as the energy source for the reaction. It is essential for DNA replication and repair of damaged DNA. The polypeptide is DNA ligase (Afipia carboxidovorans (strain ATCC 49405 / DSM 1227 / KCTC 32145 / OM5) (Oligotropha carboxidovorans)).